The primary structure comprises 232 residues: MAKIAKRVQKSREGVDPTKLYGLTEAVTLVKERATAKFDETIEVAMNLGVDPRHADQMVRGVVNLPNGTGRSVRVAVFARGAKADEAKAAGADVVGAEELVEIVQGGKIDFDRCIATPDMMPLVGRLGKVLGPRGMMPNPKVGTVTMDVTGAVKASKGGAVEFRVEKAGIVHAGIGKASFDAKALEENIRAFADAVIKAKPTGAKGNYVKRVAVSSTMGPGLKVDPATISAA.

It belongs to the universal ribosomal protein uL1 family. As to quaternary structure, part of the 50S ribosomal subunit.

In terms of biological role, binds directly to 23S rRNA. The L1 stalk is quite mobile in the ribosome, and is involved in E site tRNA release. Its function is as follows. Protein L1 is also a translational repressor protein, it controls the translation of the L11 operon by binding to its mRNA. The protein is Large ribosomal subunit protein uL1 of Rhizobium meliloti (strain 1021) (Ensifer meliloti).